A 175-amino-acid polypeptide reads, in one-letter code: Zinc finger A20 and AN1 domain-containing stress-associated protein 7 (175 aa).

An A20-type zinc finger spans residues 13 to 47 (PTEPKLCDNGCGFFGSPSNMNLCSKCYRSLRAEED). Cysteine 19, cysteine 23, cysteine 35, cysteine 38, cysteine 116, cysteine 119, cysteine 130, cysteine 132, cysteine 137, histidine 140, histidine 146, and cysteine 148 together coordinate Zn(2+). An AN1-type zinc finger spans residues 110–156 (VRPNNRCFSCNKKVGVMGFKCKCGSTFCGSHRYPEKHECSFDFKEVG).

Functionally, may be involved in environmental stress response. The sequence is that of Zinc finger A20 and AN1 domain-containing stress-associated protein 7 (SAP7) from Arabidopsis thaliana (Mouse-ear cress).